The primary structure comprises 395 residues: PCI domain-containing protein 2 homolog (395 aa).

In terms of domain architecture, PCI spans isoleucine 208–proline 389.

This sequence belongs to the CSN12 family. As to quaternary structure, component of the nuclear pore complex (NPC)-associated TREX-2/AMEX complex (anchoring and mRNA export complex), composed of e(y)2, xmas and PCID2. Interaction between the TREX-2/AMEX complex and the ORC complex is required for ORC localization to mRNPs, and consequently mRNA export. Within the TREX-2/AMEX-ORC complex, interacts with Orc3 and Orc4. Interacts with sbr/NXF1. Interacts with Moe. Interacts with nudC; required to maintain stability in the cytoplasm. In terms of processing, mono- and poly-ubiquitinated.

It is found in the nucleus. The protein resides in the cytoplasm. The protein localises to the nucleus membrane. It localises to the cytoskeleton. Its function is as follows. Required for the export of nuclear mRNAs and involved in mRNA trafficking in the cytoplasm. Component of the nuclear pore complex (NPC)-associated TREX-2/AMEX complex (anchoring and mRNA export complex) which functions in docking export-competent ribonucleoprotein particles (mRNPs) to the nuclear entrance of the nuclear pore complex (nuclear basket), thereby enabling the export of mRNAs to the cytoplasm through the nuclear pores. Within the complex, specifically promotes the association of factors involved in regulating nuclear mRNA export, such as Moe, sbr/NXF1 and the ORC complex, to the mRNPs particles. In the cytoplasm, functions independently of its role in the TREX-2/AMEX complex, to promote cytoplasmic mRNA trafficking together with nudC. Associates with translationally active polysomes. This chain is PCI domain-containing protein 2 homolog, found in Drosophila melanogaster (Fruit fly).